Consider the following 347-residue polypeptide: 5-deoxyribose 1-phosphate isomerase (347 aa).

Substrate contacts are provided by residues 48-50 (RGA), Arg91, and Gln198. The active-site Proton donor is the Asp239. Substrate is bound at residue 249 to 250 (NK).

This sequence belongs to the EIF-2B alpha/beta/delta subunits family. DrdI subfamily.

It carries out the reaction 5-deoxy-alpha-D-ribose 1-phosphate = 5-deoxy-D-ribulose 1-phosphate. The protein operates within carbohydrate degradation. Its function is as follows. Catalyzes the isomerization of 5-deoxy-alpha-D-ribose 1-phosphate to 5-deoxy-D-ribulose 1-phosphate, as part of a 5-deoxyribose salvage pathway that recycles this toxic radical SAM enzyme by-product to mainstream metabolites. The protein is 5-deoxyribose 1-phosphate isomerase of Petrotoga mobilis (strain DSM 10674 / SJ95).